A 57-amino-acid polypeptide reads, in one-letter code: Large ribosomal subunit protein bL32 (57 aa).

The disordered stretch occupies residues methionine 1–lysine 23.

This sequence belongs to the bacterial ribosomal protein bL32 family.

The chain is Large ribosomal subunit protein bL32 from Trichormus variabilis (strain ATCC 29413 / PCC 7937) (Anabaena variabilis).